Consider the following 219-residue polypeptide: GPI ethanolamine phosphate transferase, stabilizing subunit (219 aa).

6 helical membrane passes run 11-31, 42-62, 86-106, 113-133, 155-175, and 189-209; these read YTNL…SFFV, TWLC…YLVV, CFLM…APLI, FLFA…LLGP, LQIT…PIPL, and TLGA…WIYW.

It belongs to the PIGF family. In terms of assembly, part of the ethanolamine phosphate transferase 3 complex composed by PIGO and PIGF. Part of the ethanolamine phosphate transferase 2 complex with PIGG. PIGF is required to stabilize PIGG and PIGO.

It localises to the endoplasmic reticulum membrane. The protein operates within glycolipid biosynthesis; glycosylphosphatidylinositol-anchor biosynthesis. In terms of biological role, stabilizing subunit of the ethanolamine phosphate transferase 3 and ethanolamine phosphate transferase 2 complexes that sequentially transfer an ethanolamine phosphate (EtNP) from a phosphatidylethanolamine (PE) to the 6-OH position of the third alpha-1,2-linked mannose and the second alpha-1,6-linked mannose of the alpha-D-Man-(1-&gt;2)-alpha-D-Man-(1-&gt;6)-2-PEtn-alpha-D-Man-(1-&gt;4)-alpha-D-GlcN-(1-&gt;6)-(1-radyl,2-acyl-sn-glycero-3-phospho)-2-acyl-inositol (also termed H6) intermediate to generate a 6-PEtn-alpha-D-Man-(1-&gt;2)-6-PEtn-alpha-D-Man-(1-&gt;6)-2-PEtn-alpha-D-Man-(1-&gt;4)-alpha-D-GlcN-(1-&gt;6)-(1-radyl,2-acyl-sn-glycero-3-phospho)-2-acyl-inositol (also termed H8). Participates in the tenth and eleventh steps of the glycosylphosphatidylinositol-anchor biosynthesis, in association with PIGO and PIGG, respectively. This Mus musculus (Mouse) protein is GPI ethanolamine phosphate transferase, stabilizing subunit.